A 59-amino-acid chain; its full sequence is MAKLRITLVKSLIGRKKDHIATANALGLTKIRKTVEPEATPQVQGMIKKIEYLLKVEEV.

Belongs to the universal ribosomal protein uL30 family. In terms of assembly, part of the 50S ribosomal subunit.

The polypeptide is Large ribosomal subunit protein uL30 (Clostridium beijerinckii (strain ATCC 51743 / NCIMB 8052) (Clostridium acetobutylicum)).